The chain runs to 281 residues: Pantothenate synthetase (281 aa).

31–38 provides a ligand contact to ATP; it reads MGALHDGH. H38 serves as the catalytic Proton donor. Q62 lines the (R)-pantoate pocket. Position 62 (Q62) interacts with beta-alanine. 148–151 lines the ATP pocket; sequence GQKD. (R)-pantoate is bound at residue Q154. Residues V177 and 185 to 188 each bind ATP; that span reads LSSR.

It belongs to the pantothenate synthetase family. In terms of assembly, homodimer.

It localises to the cytoplasm. It catalyses the reaction (R)-pantoate + beta-alanine + ATP = (R)-pantothenate + AMP + diphosphate + H(+). It participates in cofactor biosynthesis; (R)-pantothenate biosynthesis; (R)-pantothenate from (R)-pantoate and beta-alanine: step 1/1. Catalyzes the condensation of pantoate with beta-alanine in an ATP-dependent reaction via a pantoyl-adenylate intermediate. The protein is Pantothenate synthetase of Dinoroseobacter shibae (strain DSM 16493 / NCIMB 14021 / DFL 12).